The following is a 148-amino-acid chain: uncharacterized protein (148 aa).

It belongs to the serpin family. Poxviruses subfamily.

This is an uncharacterized protein from Fowlpox virus (strain NVSL) (FPV).